The primary structure comprises 280 residues: Energy-coupling factor transporter ATP-binding protein EcfA2 (280 aa).

Residues 3-245 (ISLENVSYTY…VAFLKEKQLG (243 aa)) form the ABC transporter domain. 40-47 (GHTGSGKS) is a binding site for ATP.

The protein belongs to the ABC transporter superfamily. Energy-coupling factor EcfA family. Forms a stable energy-coupling factor (ECF) transporter complex composed of 2 membrane-embedded substrate-binding proteins (S component), 2 ATP-binding proteins (A component) and 2 transmembrane proteins (T component).

The protein localises to the cell membrane. Its function is as follows. ATP-binding (A) component of a common energy-coupling factor (ECF) ABC-transporter complex. Unlike classic ABC transporters this ECF transporter provides the energy necessary to transport a number of different substrates. This is Energy-coupling factor transporter ATP-binding protein EcfA2 from Streptococcus thermophilus (strain CNRZ 1066).